Here is a 134-residue protein sequence, read N- to C-terminus: DNA-binding protein H-NS homolog (134 aa).

The disordered stretch occupies residues 106–134 (HKTWTGQGRTPRPIQNALNKGKSLSDFEI). A DNA-binding region spans residues 112–117 (QGRTPR).

It belongs to the histone-like protein H-NS family. As to quaternary structure, homodimer that oligomerizes on DNA into higher-order complexes that form bridges between disparate regions of DNA compacting it.

It is found in the cytoplasm. It localises to the nucleoid. In terms of biological role, a DNA-binding protein implicated in transcriptional repression and chromosome organization and compaction. Binds nucleation sites in AT-rich DNA and bridges them, forming higher-order nucleoprotein complexes and condensing the chromosome. As many horizontally transferred genes are AT-rich, it plays a central role in silencing foreign genes. A subset of genes are repressed by H-NS in association with other proteins. This Haemophilus influenzae (strain ATCC 51907 / DSM 11121 / KW20 / Rd) protein is DNA-binding protein H-NS homolog (hns).